The following is a 184-amino-acid chain: Protein PLANT CADMIUM RESISTANCE 4 (184 aa).

The span at 1 to 10 (MGRPGSQPNE) shows a compositional bias: polar residues. Residues 1-21 (MGRPGSQPNEAQPPPVQVQPT) form a disordered region. A helical membrane pass occupies residues 96–116 (GGLLYGMIFFIGVPFVYSCMF).

This sequence belongs to the cornifelin family.

The protein localises to the membrane. Functionally, may be involved in heavy metals transport. In Arabidopsis thaliana (Mouse-ear cress), this protein is Protein PLANT CADMIUM RESISTANCE 4 (PCR4).